The sequence spans 317 residues: Methionyl-tRNA formyltransferase (317 aa).

113 to 116 (SLLP) contributes to the (6S)-5,6,7,8-tetrahydrofolate binding site.

The protein belongs to the Fmt family.

It catalyses the reaction L-methionyl-tRNA(fMet) + (6R)-10-formyltetrahydrofolate = N-formyl-L-methionyl-tRNA(fMet) + (6S)-5,6,7,8-tetrahydrofolate + H(+). Functionally, attaches a formyl group to the free amino group of methionyl-tRNA(fMet). The formyl group appears to play a dual role in the initiator identity of N-formylmethionyl-tRNA by promoting its recognition by IF2 and preventing the misappropriation of this tRNA by the elongation apparatus. The protein is Methionyl-tRNA formyltransferase of Pseudomonas fluorescens (strain SBW25).